We begin with the raw amino-acid sequence, 204 residues long: UPF0056 membrane protein TC_0241 (204 aa).

The next 6 helical transmembrane spans lie at 8–28 (LTLL…FVAL), 46–66 (IFAL…FRLL), 68–88 (VSLP…AINM), 107–127 (IFYP…STLG), 138–158 (LVLG…FFSS), and 176–196 (FGIS…STAF).

This sequence belongs to the UPF0056 (MarC) family.

It is found in the cell membrane. This is UPF0056 membrane protein TC_0241 from Chlamydia muridarum (strain MoPn / Nigg).